Reading from the N-terminus, the 182-residue chain is UPF0301 protein MCA0413 1 (182 aa).

Belongs to the UPF0301 (AlgH) family.

The protein is UPF0301 protein MCA0413 1 of Methylococcus capsulatus (strain ATCC 33009 / NCIMB 11132 / Bath).